The following is a 120-amino-acid chain: Cytochrome c6 (120 aa).

The N-terminal stretch at 1-35 is a signal peptide; the sequence is MFKLFNQASRIFFGIALPCLIFLGGIFSLGNTALA. Positions 49, 52, 53, and 93 each coordinate heme c.

Belongs to the cytochrome c family. PetJ subfamily. In terms of assembly, monomer. In terms of processing, binds 1 heme c group covalently per subunit.

It localises to the cellular thylakoid lumen. Functions as an electron carrier between membrane-bound cytochrome b6-f and photosystem I in oxygenic photosynthesis. This chain is Cytochrome c6 (petJ), found in Synechocystis sp. (strain ATCC 27184 / PCC 6803 / Kazusa).